Reading from the N-terminus, the 167-residue chain is Ribosome-binding factor A (167 aa).

The segment at 127–167 (SRANAQYAGDADPYKHDEPDDDDFDDDDDVEVEDWDDDDEA) is disordered. The span at 145–167 (PDDDDFDDDDDVEVEDWDDDDEA) shows a compositional bias: acidic residues.

It belongs to the RbfA family. Monomer. Binds 30S ribosomal subunits, but not 50S ribosomal subunits or 70S ribosomes.

It localises to the cytoplasm. Its function is as follows. One of several proteins that assist in the late maturation steps of the functional core of the 30S ribosomal subunit. Associates with free 30S ribosomal subunits (but not with 30S subunits that are part of 70S ribosomes or polysomes). Required for efficient processing of 16S rRNA. May interact with the 5'-terminal helix region of 16S rRNA. The chain is Ribosome-binding factor A from Bifidobacterium adolescentis (strain ATCC 15703 / DSM 20083 / NCTC 11814 / E194a).